Consider the following 506-residue polypeptide: Tyrosine-protein kinase FRK (506 aa).

Residues 43 to 111 (SQGQYFVALF…PSNYVAEDRS (69 aa)) form the SH3 domain. One can recognise an SH2 domain in the interval 117 to 209 (WFFGAIKRAD…GLCVKLEKPC (93 aa)). Phosphothreonine is present on T179. Residues 235 to 492 (IQLLKRLGSG…TLHWKLEDYF (258 aa)) enclose the Protein kinase domain. ATP contacts are provided by residues 241 to 249 (LGSGQFGEV) and K263. The Proton acceptor role is filled by D355. Phosphotyrosine; by autocatalysis is present on Y388.

The protein belongs to the protein kinase superfamily. Tyr protein kinase family. SRC subfamily. As to quaternary structure, interacts (via the SH3-domain) with PTEN. Interacts with RB1. As to expression, highly expressed in stomach, small intestine and colon. Concentrated in the brush border membranes of epithelial cells, throughout the maturation axis of the adult small intestine.

It localises to the cytoplasm. The protein localises to the nucleus. It carries out the reaction L-tyrosyl-[protein] + ATP = O-phospho-L-tyrosyl-[protein] + ADP + H(+). Its function is as follows. Non-receptor tyrosine-protein kinase that negatively regulates cell proliferation. Positively regulates PTEN protein stability through phosphorylation of PTEN on 'Tyr-336', which in turn prevents its ubiquitination and degradation, possibly by reducing its binding to NEDD4. May function as a tumor suppressor. In Rattus norvegicus (Rat), this protein is Tyrosine-protein kinase FRK (Frk).